The sequence spans 375 residues: Chaperone protein DnaJ (375 aa).

The J domain occupies 5–70 (DFYEVLGVER…SKRAAYDQYG (66 aa)). The CR-type zinc-finger motif lies at 134–212 (GTTVSIRVPT…CHGEGRVEEY (79 aa)). Residues Cys147, Cys150, Cys164, Cys167, Cys186, Cys189, Cys200, and Cys203 each coordinate Zn(2+). 4 CXXCXGXG motif repeats span residues 147–154 (CKPCDGSG), 164–171 (CPTCGGIG), 186–193 (CPRCHGQG), and 200–207 (CNSCHGEG).

Belongs to the DnaJ family. Homodimer. Zn(2+) serves as cofactor.

The protein resides in the cytoplasm. Functionally, participates actively in the response to hyperosmotic and heat shock by preventing the aggregation of stress-denatured proteins and by disaggregating proteins, also in an autonomous, DnaK-independent fashion. Unfolded proteins bind initially to DnaJ; upon interaction with the DnaJ-bound protein, DnaK hydrolyzes its bound ATP, resulting in the formation of a stable complex. GrpE releases ADP from DnaK; ATP binding to DnaK triggers the release of the substrate protein, thus completing the reaction cycle. Several rounds of ATP-dependent interactions between DnaJ, DnaK and GrpE are required for fully efficient folding. Also involved, together with DnaK and GrpE, in the DNA replication of plasmids through activation of initiation proteins. The polypeptide is Chaperone protein DnaJ (Pseudomonas entomophila (strain L48)).